The chain runs to 849 residues: DNA mismatch repair protein MutS (849 aa).

602–609 (GPNMSGKS) is an ATP binding site.

Belongs to the DNA mismatch repair MutS family.

This protein is involved in the repair of mismatches in DNA. It is possible that it carries out the mismatch recognition step. This protein has a weak ATPase activity. This Streptococcus mutans serotype c (strain ATCC 700610 / UA159) protein is DNA mismatch repair protein MutS.